A 395-amino-acid chain; its full sequence is Aurora kinase A (395 aa).

Positions 1–114 (MDRCKENCVS…QASLQKTEDT (114 aa)) are disordered. 2 stretches are compositionally biased toward polar residues: residues 29–60 (QIPSQNLGSASSGQAQRVLCPSNSQRVPSQAQ) and 84–99 (RLNNPQKNEQPAASGN). Residues S40 and S50 each carry the phosphoserine modification. A compositionally biased stretch (basic and acidic residues) spans 100–114 (DSEKEQASLQKTEDT). The 251-residue stretch at 124–374 (FDIGRPLGKG…LAEVLEHPWI (251 aa)) folds into the Protein kinase domain. Residues K134, K153, and 201–204 (LEYA) contribute to the ATP site. Catalysis depends on D247, which acts as the Proton acceptor. Residue K249 forms a Glycyl lysine isopeptide (Lys-Gly) (interchain with G-Cter in SUMO2) linkage. Residues 251 to 252 (EN) and D265 contribute to the ATP site. The segment at 271 to 284 (HAPSSRRTTMCGTL) is activation segment. T278 and T279 each carry phosphothreonine. S333 carries the phosphoserine; by PKA and PAK modification. The span at 376-385 (ANSSKPPTGH) shows a compositional bias: polar residues. The interval 376 to 395 (ANSSKPPTGHTSKEPTSKSS) is disordered. Residues 386–395 (TSKEPTSKSS) show a composition bias toward basic and acidic residues.

Belongs to the protein kinase superfamily. Ser/Thr protein kinase family. Aurora subfamily. As to quaternary structure, part of a complex composed of NEDD9, AURKA and CTTN; within the complex NEDD9 acts as a scaffold protein and is required for complex formation. Identified in a complex with AUNIP and NIN. Interacts with CPEB1, JTB, TACC1, TPX2, PPP2CA, as well as with the protein phosphatase type 1 (PP1) isoforms PPP1CA, PPP1CB and PPP1CC. Also interacts with its substrates ARHGEF2, BORA, KIF2A, PARD3, and p53/TP53. Interaction with BORA promotes phosphorylation of PLK1. Interacts with GADD45A, competing with its oligomerization. Interacts with FBXL7 and CIMAP3. Interacts (via C-terminus) with AUNIP (via C-terminus). Interacts with SIRT2. Interacts with FRY; this interaction facilitates AURKA-mediated PLK1 phosphorylation. Interacts with MYCN; interaction is phospho-independent and triggers AURKA activation; AURKA competes with FBXW7 for binding to unphosphorylated MYCN but not for binding to phosphorylated MYCN. Interacts with HNRNPU. Interacts with AAAS. Interacts with KLHL18 and CUL3. Interacts with FOXP1. Interacts with HDAC6; AURKA-mediated phosphorylation of HDAC6 promotes deacetylation of alpha-tubulin. Post-translationally, activated by phosphorylation at Thr-279; this brings about a change in the conformation of the activation segment. Phosphorylation at Thr-279 varies during the cell cycle and is highest during M phase. Autophosphorylated at Thr-279 upon TPX2 binding. Thr-279 can be phosphorylated by several kinases, including PAK and PKA. Protein phosphatase type 1 (PP1) binds AURKA and inhibits its activity by dephosphorylating Thr-279 during mitosis. Phosphorylation at Ser-333 decreases the kinase activity. PPP2CA controls degradation by dephosphorylating Ser-52 at the end of mitosis. Ubiquitinated by the anaphase-promoting complex (APC), leading to its degradation by the proteasome. Ubiquitinated by CHFR, leading to its degradation by the proteasome. Ubiquitinated by the E3 ubiquitin-protein ligase complex SCF(FBXL7) during mitosis, leading to its degradation by the proteasome. In terms of tissue distribution, detected in embryonic neurons in dorsal root ganglia and brain cortex (at protein level). Highly expressed in testis, in about one third of the seminiferous tubules. Expression is restricted to specific spermatocytes nearing completion of prophase, with levels falling off on transition to elongated spermatids. Highly expressed in the ovary, expression in the oocyte starts around the transition to large growing follicle. Abundant expression is seen in the proliferating granulosa and thecal cells of the growing follicle, and in the young corpus luteum. Very weakly expressed in spleen and intestine.

It localises to the cytoplasm. Its subcellular location is the cytoskeleton. The protein resides in the microtubule organizing center. The protein localises to the centrosome. It is found in the spindle pole. It localises to the centriole. Its subcellular location is the cell projection. The protein resides in the neuron projection. The protein localises to the cilium. It is found in the cilium basal body. It localises to the basolateral cell membrane. It catalyses the reaction L-seryl-[protein] + ATP = O-phospho-L-seryl-[protein] + ADP + H(+). The enzyme catalyses L-threonyl-[protein] + ATP = O-phospho-L-threonyl-[protein] + ADP + H(+). Activation of CDK1, appears to be an upstream event of AURKA activation. Phosphatase inhibitor-2 (PPP1R2) and TPX2 act also as activators. Inactivated by the G2 checkpoint. Inhibited by GADD45A and p53/TP53, and through dephosphorylation by protein phosphatase type 1 (PP1). MLN8054 is also a potent and selective inhibitor. Activated during the early phase of cilia disassembly in the presence of CIMAP3. Inhibited by the small molecule inhibitor VX-680. In terms of biological role, mitotic serine/threonine kinase that contributes to the regulation of cell cycle progression. Associates with the centrosome and the spindle microtubules during mitosis and plays a critical role in various mitotic events including the establishment of mitotic spindle, centrosome duplication, centrosome separation as well as maturation, chromosomal alignment, spindle assembly checkpoint, and cytokinesis. Required for normal spindle positioning during mitosis and for the localization of NUMA1 and DCTN1 to the cell cortex during metaphase. Required for initial activation of CDK1 at centrosomes. Phosphorylates numerous target proteins, including ARHGEF2, BORA, BRCA1, CDC25B, DLGP5, HDAC6, KIF2A, LATS2, NDEL1, PARD3, PPP1R2, PLK1, RASSF1, TACC3, p53/TP53 and TPX2. Phosphorylates MCRS1 which is required for MCRS1-mediated kinetochore fiber assembly and mitotic progression. Regulates KIF2A tubulin depolymerase activity. Required for normal axon formation. Plays a role in microtubule remodeling during neurite extension. Important for microtubule formation and/or stabilization. Also acts as a key regulatory component of the p53/TP53 pathway, and particularly the checkpoint-response pathways critical for oncogenic transformation of cells, by phosphorylating and destabilizing p53/TP53. Phosphorylates its own inhibitors, the protein phosphatase type 1 (PP1) isoforms, to inhibit their activity. Inhibits cilia outgrowth. Required for cilia disassembly via phosphorylation of HDAC6 and subsequent deacetylation of alpha-tubulin. Regulates protein levels of the anti-apoptosis protein BIRC5 by suppressing the expression of the SCF(FBXL7) E3 ubiquitin-protein ligase substrate adapter FBXL7 through the phosphorylation of the transcription factor FOXP1. This Mus musculus (Mouse) protein is Aurora kinase A (Aurka).